A 192-amino-acid polypeptide reads, in one-letter code: Peptidyl-tRNA hydrolase (192 aa).

Tyrosine 18 is a tRNA binding site. Residue histidine 23 is the Proton acceptor of the active site. Positions 69, 71, and 117 each coordinate tRNA.

Belongs to the PTH family. Monomer.

The protein resides in the cytoplasm. The catalysed reaction is an N-acyl-L-alpha-aminoacyl-tRNA + H2O = an N-acyl-L-amino acid + a tRNA + H(+). In terms of biological role, hydrolyzes ribosome-free peptidyl-tRNAs (with 1 or more amino acids incorporated), which drop off the ribosome during protein synthesis, or as a result of ribosome stalling. Catalyzes the release of premature peptidyl moieties from peptidyl-tRNA molecules trapped in stalled 50S ribosomal subunits, and thus maintains levels of free tRNAs and 50S ribosomes. The chain is Peptidyl-tRNA hydrolase from Neisseria meningitidis serogroup C (strain 053442).